Reading from the N-terminus, the 246-residue chain is Pyridoxine 5'-phosphate synthase (246 aa).

Residue asparagine 12 coordinates 3-amino-2-oxopropyl phosphate. 14 to 15 (DH) contacts 1-deoxy-D-xylulose 5-phosphate. Arginine 23 is a 3-amino-2-oxopropyl phosphate binding site. Histidine 48 serves as the catalytic Proton acceptor. The 1-deoxy-D-xylulose 5-phosphate site is built by arginine 50 and histidine 55. The active-site Proton acceptor is glutamate 75. Residue threonine 105 coordinates 1-deoxy-D-xylulose 5-phosphate. Histidine 196 functions as the Proton donor in the catalytic mechanism. 3-amino-2-oxopropyl phosphate contacts are provided by residues glycine 197 and 218–219 (GH).

This sequence belongs to the PNP synthase family. As to quaternary structure, homooctamer; tetramer of dimers.

Its subcellular location is the cytoplasm. It catalyses the reaction 3-amino-2-oxopropyl phosphate + 1-deoxy-D-xylulose 5-phosphate = pyridoxine 5'-phosphate + phosphate + 2 H2O + H(+). It participates in cofactor biosynthesis; pyridoxine 5'-phosphate biosynthesis; pyridoxine 5'-phosphate from D-erythrose 4-phosphate: step 5/5. Catalyzes the complicated ring closure reaction between the two acyclic compounds 1-deoxy-D-xylulose-5-phosphate (DXP) and 3-amino-2-oxopropyl phosphate (1-amino-acetone-3-phosphate or AAP) to form pyridoxine 5'-phosphate (PNP) and inorganic phosphate. This is Pyridoxine 5'-phosphate synthase from Pseudomonas putida (strain ATCC 47054 / DSM 6125 / CFBP 8728 / NCIMB 11950 / KT2440).